A 279-amino-acid polypeptide reads, in one-letter code: Lysozyme-like protein 2 (279 aa).

The signal sequence occupies residues Met1–Pro19. One can recognise a Ch-type lysozyme domain in the interval Met47 to Met265.

The protein belongs to the glycosyl hydrolase 25 family. Expressed in intestine.

Its function is as follows. Involved in resistance to Gram-positive bacteria P.aeruginosa or B.thuringiensis infection. The sequence is that of Lysozyme-like protein 2 from Caenorhabditis elegans.